Consider the following 70-residue polypeptide: Large ribosomal subunit protein bL31 (70 aa).

Residues C16, C18, C37, and C40 each contribute to the Zn(2+) site.

It belongs to the bacterial ribosomal protein bL31 family. Type A subfamily. In terms of assembly, part of the 50S ribosomal subunit. The cofactor is Zn(2+).

Binds the 23S rRNA. The protein is Large ribosomal subunit protein bL31 of Colwellia psychrerythraea (strain 34H / ATCC BAA-681) (Vibrio psychroerythus).